The following is a 140-amino-acid chain: Flagellar assembly factor FliW (140 aa).

This sequence belongs to the FliW family. Interacts with translational regulator CsrA and flagellin(s).

It is found in the cytoplasm. Acts as an anti-CsrA protein, binds CsrA and prevents it from repressing translation of its target genes, one of which is flagellin. Binds to flagellin and participates in the assembly of the flagellum. This is Flagellar assembly factor FliW from Syntrophotalea carbinolica (strain DSM 2380 / NBRC 103641 / GraBd1) (Pelobacter carbinolicus).